The sequence spans 1232 residues: Dynactin subunit 1 (1232 aa).

The 43-residue stretch at 31 to 73 (GATLFATGKWVGVILDDSKGKNDGTVQGRRYFTCEENHGIFVR) folds into the CAP-Gly domain. Disordered stretches follow at residues 82–183 (DGAD…AQVK) and 339–358 (SASE…KKNT). Low complexity predominate over residues 86 to 95 (TTSPETPEPT). Polar residues predominate over residues 108–117 (PKSSKLPTRP). Residues 118–130 (SSSAASSGTASAS) are compositionally biased toward low complexity. Over residues 133–144 (EISSSEPSTPAQ) the composition is skewed to polar residues. Over residues 146 to 163 (PLAAPIIPSPSSAITSPV) the composition is skewed to low complexity. Coiled coils occupy residues 170–505 (GPSK…KEQQ), 908–1005 (ETVI…RTIE), 1046–1071 (LLLQ…LKAH), and 1136–1166 (AAQL…ETVS). A compositionally biased stretch (basic and acidic residues) spans 172 to 183 (SKEEENLRAQVK).

The protein belongs to the dynactin 150 kDa subunit family. In terms of assembly, monomer and homodimer. Subunit of dynactin, a multiprotein complex part of a tripartite complex with dynein and a adapter, such as BICDL1, BICD2 or HOOK3. The dynactin complex is built around ACTR1A/ACTB filament and consists of an actin-related filament composed of a shoulder domain, a pointed end and a barbed end. Its length is defined by its flexible shoulder domain. The soulder is composed of 2 DCTN1 subunits, 4 DCTN2 and 2 DCTN3. DCTN1/p150(glued) binds directly to microtubules and to cytoplasmic dynein.

The protein localises to the cytoplasm. The protein resides in the cytoskeleton. Its subcellular location is the microtubule organizing center. It is found in the centrosome. It localises to the centriole. The protein localises to the spindle. The protein resides in the cell cortex. Part of the dynactin complex that activates the molecular motor dynein for ultra-processive transport along microtubules. Plays a key role in dynein-mediated retrograde transport of vesicles and organelles along microtubules by recruiting and tethering dynein to microtubules. Binds to both dynein and microtubules providing a link between specific cargos, microtubules and dynein. Essential for targeting dynein to microtubule plus ends, recruiting dynein to membranous cargos and enhancing dynein processivity (the ability to move along a microtubule for a long distance without falling off the track). Can also act as a brake to slow the dynein motor during motility along the microtubule. Can regulate microtubule stability by promoting microtubule formation, nucleation and polymerization and by inhibiting microtubule catastrophe in neurons. Inhibits microtubule catastrophe by binding both to microtubules and to tubulin, leading to enhanced microtubule stability along the axon. Plays a role in metaphase spindle orientation. Plays a role in centriole cohesion and subdistal appendage organization and function. Its recruitment to the centriole in a KIF3A-dependent manner is essential for the maintenance of centriole cohesion and the formation of subdistal appendage. Also required for microtubule anchoring at the mother centriole. Plays a role in primary cilia formation. The protein is Dynactin subunit 1 (dctn1) of Xenopus laevis (African clawed frog).